Reading from the N-terminus, the 232-residue chain is tRNA (guanine-N(1)-)-methyltransferase (232 aa).

S-adenosyl-L-methionine contacts are provided by residues glycine 114 and 134 to 139 (IGDYIL).

This sequence belongs to the RNA methyltransferase TrmD family. In terms of assembly, homodimer.

The protein localises to the cytoplasm. It catalyses the reaction guanosine(37) in tRNA + S-adenosyl-L-methionine = N(1)-methylguanosine(37) in tRNA + S-adenosyl-L-homocysteine + H(+). Specifically methylates guanosine-37 in various tRNAs. In Wolbachia pipientis subsp. Culex pipiens (strain wPip), this protein is tRNA (guanine-N(1)-)-methyltransferase.